Consider the following 115-residue polypeptide: MTEYNANSIRAKILRRKILQLIAENYVLSASLISHTLLLSYATVLRHLRILNDEGYIELYKQGRTLYAKIRDNAKQIQILNSELEGFKNVSGKPILTKDETPKEFGKKDSLTQRG.

One can recognise an HTH arsR-type domain in the interval 1 to 91; that stretch reads MTEYNANSIR…SELEGFKNVS (91 aa). Positions 30–53 form a DNA-binding region, H-T-H motif; sequence ASLISHTLLLSYATVLRHLRILND.

Functionally, essential for virus function. This is an uncharacterized protein from Saccharolobus solfataricus (Sulfolobus solfataricus).